The primary structure comprises 208 residues: Small ribosomal subunit protein uS4 (208 aa).

Residues 98–159 form the S4 RNA-binding domain; sequence LRLDNVAYRL…AARTHIRIAA (62 aa).

This sequence belongs to the universal ribosomal protein uS4 family. As to quaternary structure, part of the 30S ribosomal subunit. Contacts protein S5. The interaction surface between S4 and S5 is involved in control of translational fidelity.

In terms of biological role, one of the primary rRNA binding proteins, it binds directly to 16S rRNA where it nucleates assembly of the body of the 30S subunit. Functionally, with S5 and S12 plays an important role in translational accuracy. The protein is Small ribosomal subunit protein uS4 of Acidithiobacillus ferrooxidans (strain ATCC 23270 / DSM 14882 / CIP 104768 / NCIMB 8455) (Ferrobacillus ferrooxidans (strain ATCC 23270)).